The primary structure comprises 614 residues: Glutamine--fructose-6-phosphate aminotransferase [isomerizing] (614 aa).

The active-site Nucleophile; for GATase activity is Cys-2. A Glutamine amidotransferase type-2 domain is found at 2–221; that stretch reads CGIVGYIGKR…DGEIAVINRG (220 aa). SIS domains lie at 291–430 and 463–604; these read YKEK…EKGT and LSKT…VDQP. Lys-609 serves as the catalytic For Fru-6P isomerization activity.

Homodimer.

It localises to the cytoplasm. The enzyme catalyses D-fructose 6-phosphate + L-glutamine = D-glucosamine 6-phosphate + L-glutamate. Catalyzes the first step in hexosamine metabolism, converting fructose-6P into glucosamine-6P using glutamine as a nitrogen source. This Bacteroides thetaiotaomicron (strain ATCC 29148 / DSM 2079 / JCM 5827 / CCUG 10774 / NCTC 10582 / VPI-5482 / E50) protein is Glutamine--fructose-6-phosphate aminotransferase [isomerizing].